We begin with the raw amino-acid sequence, 344 residues long: Dihydroorotate dehydrogenase (quinone) (344 aa).

FMN-binding positions include 65-69 (AGLDK) and T89. A substrate-binding site is contributed by K69. 114–118 (NRMGF) serves as a coordination point for substrate. FMN-binding residues include N145 and N178. N178 contacts substrate. Catalysis depends on S181, which acts as the Nucleophile. N183 is a binding site for substrate. Residues K223 and T251 each contribute to the FMN site. Residue 252-253 (NT) participates in substrate binding. FMN is bound by residues G274, G303, and 324–325 (YT).

Belongs to the dihydroorotate dehydrogenase family. Type 2 subfamily. In terms of assembly, monomer. Requires FMN as cofactor.

It is found in the cell membrane. It carries out the reaction (S)-dihydroorotate + a quinone = orotate + a quinol. Its pathway is pyrimidine metabolism; UMP biosynthesis via de novo pathway; orotate from (S)-dihydroorotate (quinone route): step 1/1. Functionally, catalyzes the conversion of dihydroorotate to orotate with quinone as electron acceptor. This Ralstonia nicotianae (strain ATCC BAA-1114 / GMI1000) (Ralstonia solanacearum) protein is Dihydroorotate dehydrogenase (quinone).